Reading from the N-terminus, the 256-residue chain is 5-oxoprolinase subunit A (256 aa).

Belongs to the LamB/PxpA family. In terms of assembly, forms a complex composed of PxpA, PxpB and PxpC.

It catalyses the reaction 5-oxo-L-proline + ATP + 2 H2O = L-glutamate + ADP + phosphate + H(+). Catalyzes the cleavage of 5-oxoproline to form L-glutamate coupled to the hydrolysis of ATP to ADP and inorganic phosphate. The sequence is that of 5-oxoprolinase subunit A from Azoarcus sp. (strain BH72).